The chain runs to 118 residues: Large ribosomal subunit protein bL19 (118 aa).

The protein belongs to the bacterial ribosomal protein bL19 family.

In terms of biological role, this protein is located at the 30S-50S ribosomal subunit interface and may play a role in the structure and function of the aminoacyl-tRNA binding site. In Saccharophagus degradans (strain 2-40 / ATCC 43961 / DSM 17024), this protein is Large ribosomal subunit protein bL19.